The chain runs to 269 residues: MFTDTINKCAANAARIARLSANNPLGFWVSSAMAGAYVGLGIILIFTLGNLLDPSVRPLVMGATFGIALTLVIIAGSELFTGHTMFLTLGVKAGTISHGQMWAILPQTWLGNLVGSVFVALLYSWGGGSLLPVDTSIVHSVALAKTTAPATVLFFKGALCNWLVCLAIWMAIRTEGTAKFLAIWWCLLAFIASGYEHSVANMTLFALSWFGHHSDAYTLAGIGHNLLWVTLGNTLSGVVFMGLGYWYATPKSERPAPAKINQPEAAANN.

Residues 1 to 29 (MFTDTINKCAANAARIARLSANNPLGFWV) are Cytoplasmic-facing. A helical membrane pass occupies residues 30–46 (SSAMAGAYVGLGIILIF). Residues 47–58 (TLGNLLDPSVRP) lie on the Extracellular side of the membrane. A helical transmembrane segment spans residues 59–75 (LVMGATFGIALTLVIIA). The Cytoplasmic portion of the chain corresponds to 76–107 (GSELFTGHTMFLTLGVKAGTISHGQMWAILPQ). A helical transmembrane segment spans residues 108–125 (TWLGNLVGSVFVALLYSW). Over 126 to 153 (GGGSLLPVDTSIVHSVALAKTTAPATVL) the chain is Extracellular. A helical transmembrane segment spans residues 154–172 (FFKGALCNWLVCLAIWMAI). The Cytoplasmic segment spans residues 173-179 (RTEGTAK). A helical membrane pass occupies residues 180-195 (FLAIWWCLLAFIASGY). The Extracellular portion of the chain corresponds to 196-230 (EHSVANMTLFALSWFGHHSDAYTLAGIGHNLLWVT). The helical transmembrane segment at 231–250 (LGNTLSGVVFMGLGYWYATP) threads the bilayer. Topologically, residues 251–269 (KSERPAPAKINQPEAAANN) are cytoplasmic.

Belongs to the FNT transporter (TC 1.A.16) family.

The protein localises to the cell inner membrane. Functionally, catalyzes nitrite uptake and nitrite export across the cytoplasmic membrane. This Salmonella typhimurium (strain LT2 / SGSC1412 / ATCC 700720) protein is Nitrite transporter NirC (nirC).